The primary structure comprises 268 residues: GTP cyclohydrolase III (268 aa).

Belongs to the archaeal-type GTP cyclohydrolase family. Homotrimer. Mg(2+) serves as cofactor.

It carries out the reaction GTP + 3 H2O = 2-amino-5-formylamino-6-(5-phospho-D-ribosylamino)pyrimidin-4(3H)-one + 2 phosphate + 2 H(+). Functionally, catalyzes the formation of 2-amino-5-formylamino-6-ribofuranosylamino-4(3H)-pyrimidinone ribonucleotide monophosphate and inorganic phosphate from GTP. Also has an independent pyrophosphate phosphohydrolase activity. The protein is GTP cyclohydrolase III (gch3) of Methanocaldococcus jannaschii (strain ATCC 43067 / DSM 2661 / JAL-1 / JCM 10045 / NBRC 100440) (Methanococcus jannaschii).